The sequence spans 220 residues: ATP synthase subunit delta (220 aa).

The protein belongs to the ATPase delta chain family. In terms of assembly, F-type ATPases have 2 components, F(1) - the catalytic core - and F(0) - the membrane proton channel. F(1) has five subunits: alpha(3), beta(3), gamma(1), delta(1), epsilon(1). F(0) has three main subunits: a(1), b(2) and c(10-14). The alpha and beta chains form an alternating ring which encloses part of the gamma chain. F(1) is attached to F(0) by a central stalk formed by the gamma and epsilon chains, while a peripheral stalk is formed by the delta and b chains.

Its subcellular location is the cell inner membrane. F(1)F(0) ATP synthase produces ATP from ADP in the presence of a proton or sodium gradient. F-type ATPases consist of two structural domains, F(1) containing the extramembraneous catalytic core and F(0) containing the membrane proton channel, linked together by a central stalk and a peripheral stalk. During catalysis, ATP synthesis in the catalytic domain of F(1) is coupled via a rotary mechanism of the central stalk subunits to proton translocation. Its function is as follows. This protein is part of the stalk that links CF(0) to CF(1). It either transmits conformational changes from CF(0) to CF(1) or is implicated in proton conduction. This is ATP synthase subunit delta from Gluconobacter oxydans (strain 621H) (Gluconobacter suboxydans).